The primary structure comprises 134 residues: Small ribosomal subunit protein uS8c (134 aa).

It belongs to the universal ribosomal protein uS8 family. Part of the 30S ribosomal subunit.

Its subcellular location is the plastid. The protein resides in the chloroplast. One of the primary rRNA binding proteins, it binds directly to 16S rRNA central domain where it helps coordinate assembly of the platform of the 30S subunit. The polypeptide is Small ribosomal subunit protein uS8c (rps8) (Aethionema cordifolium (Lebanon stonecress)).